A 129-amino-acid chain; its full sequence is Protein RALF-like 34 (129 aa).

Positions 1 to 23 (MAASSLNLLLILSLLTFISLQRS) are cleaved as a signal peptide. Positions 24–76 (ESLSDNPSLTLLPDGFDWPISHSDEFDIIDGEESFEVTEEDDGVTDRRSLYWR) are cleaved as a propeptide — removed in mature form. 2 disulfide bridges follow: Cys-94-Cys-107 and Cys-121-Cys-127.

This sequence belongs to the plant rapid alkalinization factor (RALF) family. Proteolytically cleaved, probably by S1P, a subtilisin-like serine protease (subtilase). Expressed in roots, stems and leaves.

The protein resides in the secreted. Cell signaling peptide that may regulate plant stress, growth, and development. Mediates a rapid alkalinization of extracellular space by mediating a transient increase in the cytoplasmic Ca(2+) concentration leading to a calcium-dependent signaling events through a cell surface receptor and a concomitant activation of some intracellular mitogen-activated protein kinases. In Arabidopsis thaliana (Mouse-ear cress), this protein is Protein RALF-like 34 (RALFL34).